The chain runs to 40 residues: Photosystem II reaction center protein J (40 aa).

Residues 8–28 (IPLWIIGTVAGIPVIGLIGIF) form a helical membrane-spanning segment.

This sequence belongs to the PsbJ family. In terms of assembly, PSII is composed of 1 copy each of membrane proteins PsbA, PsbB, PsbC, PsbD, PsbE, PsbF, PsbH, PsbI, PsbJ, PsbK, PsbL, PsbM, PsbT, PsbX, PsbY, PsbZ, Psb30/Ycf12, at least 3 peripheral proteins of the oxygen-evolving complex and a large number of cofactors. It forms dimeric complexes.

It is found in the plastid. It localises to the chloroplast thylakoid membrane. In terms of biological role, one of the components of the core complex of photosystem II (PSII). PSII is a light-driven water:plastoquinone oxidoreductase that uses light energy to abstract electrons from H(2)O, generating O(2) and a proton gradient subsequently used for ATP formation. It consists of a core antenna complex that captures photons, and an electron transfer chain that converts photonic excitation into a charge separation. This chain is Photosystem II reaction center protein J, found in Pelargonium hortorum (Common geranium).